A 579-amino-acid polypeptide reads, in one-letter code: MVSAGSTINLFGNFRCIVIQKIGELWGGEVTDSLLHKLIVAPPTEDRHGDVYTNAALVVGKFKRKNPMEIAEHLRQALAEVEGVDSVDVVPPGFVNLKCSNEVWYSAIRDINKAGKDYGAVNLGQGQKVNVEFVSANPTGPLHIGHARGAVFGDVLSNLLAWVGYDVTREYYVNDAGGQINTLVESVYLRYKEALGEQVTIGEGLYPGEYLKPIAKALVEKHGDKLLASEDRTAVIREFALKSILDLIREDMALLGVKHDVFTYEADLQRSRTVEKCVEFLQQKGMLYYGTLERPRGVEEEAAWQAREQLLFRSTDFGDDSDRALQKEDGSWTYFAGDIAYHFDKISRGFHDMILGLGFDHKGYVSRLKAAVHALSDGKATIDVKLHNMVNFLENGVPVKMSKRRGEFLTARDVVEEVGKDVARFIMMTRKNDVVLDFDFAKAKEQSKDSQIFYIQYAHARACSLMRNAPTLLPIEDVDFSRVSSAPEIALIKLLVRWPNIVESSAVNHEPHRIAFYLLEVAEAFHVLWGHGSRSVDMRFIVEGDIATTSARIYLVKVVALVISLGLSIFSIAPMEEMR.

Positions 136 to 146 (ANPTGPLHIGH) match the 'HIGH' region motif.

Belongs to the class-I aminoacyl-tRNA synthetase family. Monomer.

The protein resides in the cytoplasm. It catalyses the reaction tRNA(Arg) + L-arginine + ATP = L-arginyl-tRNA(Arg) + AMP + diphosphate. The sequence is that of Arginine--tRNA ligase from Anaplasma marginale (strain St. Maries).